Reading from the N-terminus, the 225-residue chain is Lipoprotein CseA (225 aa).

Positions 1–36 are cleaved as a signal peptide; that stretch reads MRGLTDGRTPRGTRRTTQAASTAVAVFVALGVSLAG. Cys-37 carries N-palmitoyl cysteine lipidation. Cys-37 is lipidated: S-diacylglycerol cysteine. Disordered regions lie at residues 40-77 and 205-225; these read GGTGARDEGPAHADAVGGAGSASPAPAAKASPSKAPDR and THNDYSKAAGNAPTPAPEPDS. Positions 60 to 73 are enriched in low complexity; it reads SASPAPAAKASPSK.

The protein localises to the cell membrane. In terms of biological role, may be involved in the stabilization of the cell envelope or may interact with the sensor protein CseC to modulate its activity, in response to cell envelope stress. This Streptomyces coelicolor (strain ATCC BAA-471 / A3(2) / M145) protein is Lipoprotein CseA (cseA).